Here is a 430-residue protein sequence, read N- to C-terminus: Chromatin assembly factor 1 p55 subunit (430 aa).

Ser-11 and Ser-100 each carry phosphoserine. 6 WD repeats span residues Asn-126–Thr-159, Gly-179–Asp-210, Gly-229–Asp-260, Ala-275–Asp-306, Ser-319–Asp-350, and Gly-376–Gln-407.

Belongs to the WD repeat RBAP46/RBAP48/MSI1 family. As to quaternary structure, probably binds directly to helix 1 of the histone fold of histone H4, a region that is not accessible when H4 is in chromatin. Self associates. Associates with chromatin. Component of the CAF-1 complex, composed of Caf1-55, Caf1-105 and Caf1-180; within the CAF-1 complex, Caf1-180 interacts directly with both Caf1-55 and Caf1-105. Component of the NuRD complex, composed of at least Caf1-55, Mi-2, MTA1-like and HDAC1/Rpd3. Within the NuRD complex, Caf1-55 may interact directly with Mi-2, MTA1-like and HDAC1/Rpd3. The NuRD complex may also associate with the methyl-DNA binding protein MBD-like via Caf1-55 and Mi-2. Component of the NURF complex, composed of Caf1-55, E(bx), Nurf-38 and Iswi. Component of the polycomb repressive complex 2 (PRC2, also known as the Esc/E(Z) complex), composed of Caf1-55, esc, E(z), Su(z)12, and possibly pho. PRC2 associates with the accessory components Jarid2 and jing to form the PRC2 Jarid2-jing variant (PRC2.2). PRC2 may also associate with Pcl and HDAC1/Rpd3 during early embryogenesis. Interacts with Rbf and Rbf2. Component of the DREAM complex at least composed of Myb, Caf1-55, mip40, mip120, mip130, E2f2, Dp, Rbf, Rbf2, lin-52, HDAC1/Rpd3 and l(3)mbt.

It is found in the nucleus. In terms of biological role, core histone-binding subunit that may target chromatin assembly factors, chromatin remodeling factors and histone deacetylases to their histone substrates in a manner that is regulated by nucleosomal DNA. Component of several complexes which regulate chromatin metabolism. These include the chromatin assembly factor 1 (CAF-1) complex, which is required for chromatin assembly following DNA replication and DNA repair; the nucleosome remodeling and deacetylase complex (the NuRD complex), which promotes transcriptional repression by histone deacetylation and nucleosome remodeling; the nucleosome remodeling factor (NURF) complex, which catalyzes ATP-dependent nucleosome sliding and facilitates transcription of chromatin; and the polycomb group (PcG) repressor complex ESC-E(Z), which promotes repression of homeotic genes during development. Also required for transcriptional repression of E2F target genes by E2f2 and Rbf or Rbf2. The sequence is that of Chromatin assembly factor 1 p55 subunit from Drosophila melanogaster (Fruit fly).